A 222-amino-acid chain; its full sequence is Beta-amylase (222 aa).

Thr-36 serves as a coordination point for substrate. Glu-74 acts as the Proton acceptor in catalysis. Residues 75–76 (NA) and Arg-114 contribute to the substrate site.

Belongs to the glycosyl hydrolase 14 family.

The enzyme catalyses Hydrolysis of (1-&gt;4)-alpha-D-glucosidic linkages in polysaccharides so as to remove successive maltose units from the non-reducing ends of the chains.. The polypeptide is Beta-amylase (BMY1) (Secale cereale (Rye)).